The primary structure comprises 204 residues: MPTPTKGARLGGSPAHERLLLANLATALFEHGGITTTEAKAKRLRPYAERLVTFAKRGDLHARRRVMRHVRDNSVVHTLFTEIGPRYANRDGGYTRIIKLGNRKGDNAPLARIELVEALTVGQQAVGEAERARGTRFSERRKPTGATAEAAEDLASESPTAAAVAAQSAEEQAPVEETLTAQAAETSAATVEETDDDGPAESKS.

The tract at residues 124–204 is disordered; it reads QAVGEAERAR…DDDGPAESKS (81 aa). Over residues 128–142 the composition is skewed to basic and acidic residues; sequence EAERARGTRFSERRK. Over residues 156–191 the composition is skewed to low complexity; the sequence is SESPTAAAVAAQSAEEQAPVEETLTAQAAETSAATV. The segment covering 192–204 has biased composition (acidic residues); sequence EETDDDGPAESKS.

This sequence belongs to the bacterial ribosomal protein bL17 family. As to quaternary structure, part of the 50S ribosomal subunit. Contacts protein L32.

This Frankia alni (strain DSM 45986 / CECT 9034 / ACN14a) protein is Large ribosomal subunit protein bL17.